Consider the following 104-residue polypeptide: UPF0145 protein RD1_2695 (104 aa).

It belongs to the UPF0145 family.

In Roseobacter denitrificans (strain ATCC 33942 / OCh 114) (Erythrobacter sp. (strain OCh 114)), this protein is UPF0145 protein RD1_2695.